We begin with the raw amino-acid sequence, 137 residues long: Large ribosomal subunit protein uL16 (137 aa).

It belongs to the universal ribosomal protein uL16 family. Part of the 50S ribosomal subunit.

Binds 23S rRNA and is also seen to make contacts with the A and possibly P site tRNAs. This chain is Large ribosomal subunit protein uL16, found in Bartonella tribocorum (strain CIP 105476 / IBS 506).